The primary structure comprises 387 residues: Phosphoglycerate kinase (387 aa).

Substrate-binding positions include Asp21 to Asn23, Arg36, His59 to Arg62, Arg113, and Arg146. ATP is bound by residues Lys197, Glu314, and Gly340–Thr343.

This sequence belongs to the phosphoglycerate kinase family. In terms of assembly, monomer.

The protein resides in the cytoplasm. The catalysed reaction is (2R)-3-phosphoglycerate + ATP = (2R)-3-phospho-glyceroyl phosphate + ADP. It participates in carbohydrate degradation; glycolysis; pyruvate from D-glyceraldehyde 3-phosphate: step 2/5. This chain is Phosphoglycerate kinase, found in Pseudomonas putida (strain W619).